The chain runs to 245 residues: Probable transcriptional regulatory protein CPR_1922 (245 aa).

It belongs to the TACO1 family.

It localises to the cytoplasm. This Clostridium perfringens (strain SM101 / Type A) protein is Probable transcriptional regulatory protein CPR_1922.